We begin with the raw amino-acid sequence, 147 residues long: Small ribosomal subunit protein uS12 (147 aa).

The protein belongs to the universal ribosomal protein uS12 family. Part of the 30S ribosomal subunit.

Functionally, with S4 and S5 plays an important role in translational accuracy. Located at the interface of the 30S and 50S subunits. The polypeptide is Small ribosomal subunit protein uS12 (Pyrobaculum islandicum (strain DSM 4184 / JCM 9189 / GEO3)).